The primary structure comprises 267 residues: 4-hydroxy-tetrahydrodipicolinate reductase (267 aa).

Residues Gly-9–Met-14 and Asp-35 contribute to the NAD(+) site. Arg-36 contacts NADP(+). Residues Gly-98–Thr-100 and Ala-122–Met-125 contribute to the NAD(+) site. His-155 acts as the Proton donor/acceptor in catalysis. His-156 serves as a coordination point for (S)-2,3,4,5-tetrahydrodipicolinate. The Proton donor role is filled by Lys-159. Gly-165–Thr-166 contacts (S)-2,3,4,5-tetrahydrodipicolinate.

Belongs to the DapB family.

It localises to the cytoplasm. It catalyses the reaction (S)-2,3,4,5-tetrahydrodipicolinate + NAD(+) + H2O = (2S,4S)-4-hydroxy-2,3,4,5-tetrahydrodipicolinate + NADH + H(+). The enzyme catalyses (S)-2,3,4,5-tetrahydrodipicolinate + NADP(+) + H2O = (2S,4S)-4-hydroxy-2,3,4,5-tetrahydrodipicolinate + NADPH + H(+). It functions in the pathway amino-acid biosynthesis; L-lysine biosynthesis via DAP pathway; (S)-tetrahydrodipicolinate from L-aspartate: step 4/4. In terms of biological role, catalyzes the conversion of 4-hydroxy-tetrahydrodipicolinate (HTPA) to tetrahydrodipicolinate. This chain is 4-hydroxy-tetrahydrodipicolinate reductase, found in Thiobacillus denitrificans (strain ATCC 25259 / T1).